The sequence spans 542 residues: Chaperonin GroEL (542 aa).

ATP-binding positions include 29–32 (TMGP), Lys-50, 86–90 (DGTTT), Gly-414, 477–479 (NAA), and Asp-493.

It belongs to the chaperonin (HSP60) family. In terms of assembly, forms a cylinder of 14 subunits composed of two heptameric rings stacked back-to-back. Interacts with the co-chaperonin GroES.

It localises to the cytoplasm. The catalysed reaction is ATP + H2O + a folded polypeptide = ADP + phosphate + an unfolded polypeptide.. Together with its co-chaperonin GroES, plays an essential role in assisting protein folding. The GroEL-GroES system forms a nano-cage that allows encapsulation of the non-native substrate proteins and provides a physical environment optimized to promote and accelerate protein folding. The polypeptide is Chaperonin GroEL (Sulfurovum sp. (strain NBC37-1)).